A 92-amino-acid polypeptide reads, in one-letter code: MSDENKSTPIVKASDITDKLKEDILTISKDALDKYQLERDIAGTVKKQLDVKYGNTWHVIVGKNFGSYVTHEKGHFVYFYIGPLAFLVFKTA.

The protein belongs to the dynein light chain family. Homodimer. Cytoplasmic dynein consists of two catalytic heavy chains (HCs) and a number of non-catalytic subunits which present intermediate chains (ICs), light intermediate chains (LICs) and light chains (LCs). Component of the nuclear pore complex (NPC). NPC constitutes the exclusive means of nucleocytoplasmic transport. NPCs allow the passive diffusion of ions and small molecules and the active, nuclear transport receptor-mediated bidirectional transport of macromolecules such as proteins, RNAs, ribonucleoparticles (RNPs), and ribosomal subunits across the nuclear envelope. Due to its 8-fold rotational symmetry, all subunits are present with 8 copies or multiples thereof. Part of the NUP82 subcomplex. In the complex, interacts directly with Nup159.

It localises to the cytoplasm. The protein localises to the cytoskeleton. Its subcellular location is the nucleus. It is found in the nuclear pore complex. Functionally, acts as one of several non-catalytic accessory components of the cytoplasmic dynein complex that are thought to be involved in linking dynein to cargos and to adapter proteins that regulate dynein function. Cytoplasmic dynein 1 acts as a motor for the intracellular retrograde motility of vesicles and organelles along microtubules. May play a role in changing or maintaining the spatial distribution of cytoskeletal structures. Also a component of the nuclear pore complex where it may contribute to the stable association of the Nup82 subcomplex with the NPC. In Saccharomyces cerevisiae (strain ATCC 204508 / S288c) (Baker's yeast), this protein is Dynein light chain 1, cytoplasmic (DYN2).